A 171-amino-acid chain; its full sequence is 3-hydroxydecanoyl-[acyl-carrier-protein] dehydratase (171 aa).

H70 is a catalytic residue.

It belongs to the thioester dehydratase family. FabA subfamily. Homodimer.

It localises to the cytoplasm. It carries out the reaction a (3R)-hydroxyacyl-[ACP] = a (2E)-enoyl-[ACP] + H2O. The catalysed reaction is (3R)-hydroxydecanoyl-[ACP] = (2E)-decenoyl-[ACP] + H2O. It catalyses the reaction (2E)-decenoyl-[ACP] = (3Z)-decenoyl-[ACP]. The protein operates within lipid metabolism; fatty acid biosynthesis. Necessary for the introduction of cis unsaturation into fatty acids. Catalyzes the dehydration of (3R)-3-hydroxydecanoyl-ACP to E-(2)-decenoyl-ACP and then its isomerization to Z-(3)-decenoyl-ACP. Can catalyze the dehydratase reaction for beta-hydroxyacyl-ACPs with saturated chain lengths up to 16:0, being most active on intermediate chain length. The sequence is that of 3-hydroxydecanoyl-[acyl-carrier-protein] dehydratase from Azotobacter vinelandii (strain DJ / ATCC BAA-1303).